The following is a 177-amino-acid chain: Thymidine kinase (177 aa).

Residue 11–18 (GPMFSGKS) coordinates ATP. E83 serves as the catalytic Proton acceptor. F113 provides a ligand contact to substrate. C138 and C141 together coordinate Zn(2+). 157 to 161 (IEIIG) provides a ligand contact to substrate. The Zn(2+) site is built by C170 and C173.

Belongs to the thymidine kinase family. Homotetramer. Two molecules of substrate bind to each enzyme tetramer.

The catalysed reaction is thymidine + ATP = dTMP + ADP + H(+). Functionally, phosphorylates thymidine and thymidine analogs, such as azidothymidine (AZT). Part of the salvage pathway for pyrimidine deoxyribonucleotide synthesis. The sequence is that of Thymidine kinase (OPG101) from Vaccinia virus (strain Copenhagen) (VACV).